Here is a 215-residue protein sequence, read N- to C-terminus: Ribosomal RNA small subunit methyltransferase G (215 aa).

S-adenosyl-L-methionine is bound by residues Gly77, Phe82, 130-131 (IE), and Arg146.

The protein belongs to the methyltransferase superfamily. RNA methyltransferase RsmG family.

It localises to the cytoplasm. It carries out the reaction guanosine(527) in 16S rRNA + S-adenosyl-L-methionine = N(7)-methylguanosine(527) in 16S rRNA + S-adenosyl-L-homocysteine. Specifically methylates the N7 position of guanine in position 527 of 16S rRNA. This chain is Ribosomal RNA small subunit methyltransferase G, found in Bartonella henselae (strain ATCC 49882 / DSM 28221 / CCUG 30454 / Houston 1) (Rochalimaea henselae).